The chain runs to 446 residues: Coiled-coil domain-containing protein 112 (446 aa).

2 coiled-coil regions span residues 35–116 (KTER…RKID) and 219–400 (ERKK…NVSR). 2 disordered regions span residues 253–272 (FHNKQEDNQKQKEEQRKKQK) and 390–430 (LKEK…LLHI). Residues 255-268 (NKQEDNQKQKEEQR) are compositionally biased toward basic and acidic residues.

The protein localises to the cytoplasm. It localises to the cytoskeleton. The protein resides in the microtubule organizing center. Its subcellular location is the centrosome. It is found in the centriolar satellite. The protein is Coiled-coil domain-containing protein 112 (CCDC112) of Homo sapiens (Human).